A 205-amino-acid chain; its full sequence is Holliday junction branch migration complex subunit RuvA (205 aa).

The interval methionine 1–isoleucine 64 is domain I. Residues threonine 65 to glutamate 143 are domain II. Positions arginine 144 to proline 156 are flexible linker. The domain III stretch occupies residues threonine 157–leucine 205.

This sequence belongs to the RuvA family. As to quaternary structure, homotetramer. Forms an RuvA(8)-RuvB(12)-Holliday junction (HJ) complex. HJ DNA is sandwiched between 2 RuvA tetramers; dsDNA enters through RuvA and exits via RuvB. An RuvB hexamer assembles on each DNA strand where it exits the tetramer. Each RuvB hexamer is contacted by two RuvA subunits (via domain III) on 2 adjacent RuvB subunits; this complex drives branch migration. In the full resolvosome a probable DNA-RuvA(4)-RuvB(12)-RuvC(2) complex forms which resolves the HJ.

It localises to the cytoplasm. The RuvA-RuvB-RuvC complex processes Holliday junction (HJ) DNA during genetic recombination and DNA repair, while the RuvA-RuvB complex plays an important role in the rescue of blocked DNA replication forks via replication fork reversal (RFR). RuvA specifically binds to HJ cruciform DNA, conferring on it an open structure. The RuvB hexamer acts as an ATP-dependent pump, pulling dsDNA into and through the RuvAB complex. HJ branch migration allows RuvC to scan DNA until it finds its consensus sequence, where it cleaves and resolves the cruciform DNA. The protein is Holliday junction branch migration complex subunit RuvA of Shewanella sp. (strain MR-7).